We begin with the raw amino-acid sequence, 42 residues long: MKVIGSLKSAKVRDKDCRVVRRKGRIYVINKKNPRFKARQGY.

It belongs to the bacterial ribosomal protein bL36 family.

This is Large ribosomal subunit protein bL36 from Ehrlichia chaffeensis (strain ATCC CRL-10679 / Arkansas).